Here is a 339-residue protein sequence, read N- to C-terminus: MGDRSPFETDMLTLTRYVMEKGRQAKGTGELTQLLNSMLTAIKAISSAVRKAGLANLYGIAGSVNVTGDEVKKLDVLSNALVINMLQSSYSTCVLVSEENKEAIITSKEKRGKYVVCFDPLDGSSNIDCLASIGTIFAIYRKTSEDEPSEKDALQPGRNIVAAGYALYGSATLVALSTGQGVDLFMLDPALGEFVLVEKDVKIKKKGKIYSLNEGYAKYFDAATTEYVQKKKFPEDGSAPYGARYVGSMVADVHRTLVYGGIFLYPANQKSPKGKLRLLYECNPVAYIIEQAGGLATTGTQPVLDVKPEAIHQRVPLILGSPEDVQEYLTCVQKNQAGR.

Residues 3-10 form an important for interaction with ALDOA region; sequence DRSPFETD. Residues Val-18 and 28–32 each bind AMP; that span reads TGELT. Mg(2+) is bound by residues Asp-69 and Glu-98. AMP is bound at residue 113–114; the sequence is KY. 3 residues coordinate Mg(2+): Asp-119, Leu-121, and Asp-122. Asp-122 is a substrate binding site. Position 141 (Arg-141) interacts with AMP. The Nuclear localization signal signature appears at 204–208; that stretch reads KKKGK. 213–216 provides a ligand contact to substrate; that stretch reads NEGY. Phosphotyrosine occurs at positions 216 and 219. Substrate contacts are provided by residues 245–249, Tyr-265, and Lys-275; that span reads YVGSM. Glu-281 provides a ligand contact to Mg(2+).

The protein belongs to the FBPase class 1 family. As to quaternary structure, homotetramer. Interacts with ALDOA; the interaction blocks inhibition by physiological concentrations of AMP and reduces inhibition by Ca(2+). Interacts with alpha-actinin and F-actin. The cofactor is Mg(2+).

It localises to the cell junction. Its subcellular location is the cytoplasm. The protein resides in the nucleus. It is found in the myofibril. The protein localises to the sarcomere. It localises to the z line. The enzyme catalyses beta-D-fructose 1,6-bisphosphate + H2O = beta-D-fructose 6-phosphate + phosphate. The protein operates within carbohydrate biosynthesis; gluconeogenesis. Its activity is regulated as follows. Subject to complex allosteric regulation. The enzyme can assume an active R-state, or an inactive T-state. Intermediate conformations may exist. AMP acts as an allosteric inhibitor. Fructose 2,6-bisphosphate acts as a competitive inhibitor. Strongly inhibited by Ca(2+). Catalyzes the hydrolysis of fructose 1,6-bisphosphate to fructose 6-phosphate in the presence of divalent cations and probably participates in glycogen synthesis from carbohydrate precursors, such as lactate. In Bos taurus (Bovine), this protein is Fructose-1,6-bisphosphatase isozyme 2 (FBP2).